The following is a 285-amino-acid chain: Methyltransferase grgD (285 aa).

This sequence belongs to the methyltransferase superfamily. LaeA methyltransferase family.

The protein operates within secondary metabolite biosynthesis. In terms of biological role, methyltransferase; part of the gene cluster that mediates the biosynthesis of gregatin A, a fungal polyketide featuring an alkylated furanone core. The PKS grgA synthesizes C11 and C4 polyketide chains in the presence and absence of the trans-enoyl reductase grgB, respectively. The polyketide transferase grgF is then responsible for the fusion of the two carbon chains to produce the furanone skeleton of gregatin A. Next, the cytochrome P450 monooxygenase grgG accepts performs the oxidative cyclization to furnish the gregatin scaffold and leads to the formation of desmethylgregatin A. Finally, the O-methyltransferase grgD methylates the carboxyl group of desmethylgregatin A to provide gregatin A. This is Methyltransferase grgD from Penicillium sp.